We begin with the raw amino-acid sequence, 303 residues long: Putative HTH-type transcriptional regulatory protein Mpal_0031 (303 aa).

In terms of domain architecture, HTH cro/C1-type spans Leu-132–Leu-189. The segment at residues Leu-143–Ser-162 is a DNA-binding region (H-T-H motif).

This Methanosphaerula palustris (strain ATCC BAA-1556 / DSM 19958 / E1-9c) protein is Putative HTH-type transcriptional regulatory protein Mpal_0031.